A 456-amino-acid chain; its full sequence is tRNA modification GTPase MnmE (456 aa).

(6S)-5-formyl-5,6,7,8-tetrahydrofolate is bound by residues arginine 26, glutamate 86, and arginine 125. Positions 222 to 376 (GLSTAIIGRP…IEDRINQLFF (155 aa)) constitute a TrmE-type G domain. Asparagine 232 contributes to the K(+) binding site. GTP contacts are provided by residues 232–237 (NVGKSS), 251–257 (TDIEGTT), and 276–279 (DTAG). Residue serine 236 coordinates Mg(2+). Positions 251, 253, and 256 each coordinate K(+). Threonine 257 lines the Mg(2+) pocket. Lysine 456 lines the (6S)-5-formyl-5,6,7,8-tetrahydrofolate pocket.

It belongs to the TRAFAC class TrmE-Era-EngA-EngB-Septin-like GTPase superfamily. TrmE GTPase family. In terms of assembly, homodimer. Heterotetramer of two MnmE and two MnmG subunits. It depends on K(+) as a cofactor.

It localises to the cytoplasm. Its function is as follows. Exhibits a very high intrinsic GTPase hydrolysis rate. Involved in the addition of a carboxymethylaminomethyl (cmnm) group at the wobble position (U34) of certain tRNAs, forming tRNA-cmnm(5)s(2)U34. In Streptococcus thermophilus (strain CNRZ 1066), this protein is tRNA modification GTPase MnmE.